Consider the following 137-residue polypeptide: uncharacterized protein (137 aa).

This is an uncharacterized protein from Mycobacterium leprae (strain TN).